The chain runs to 256 residues: GCN5-related N-acetyltransferase 10, chloroplastic (256 aa).

A chloroplast-targeting transit peptide spans 1–41 (MGHLPQSLYSAAGPKFPYPGSSGLGVDQRKLTWSRFPVFLR). In terms of domain architecture, N-acetyltransferase spans 106-256 (FMFFQAEVLS…RRVLMSKRFS (151 aa)). Acetyl-CoA-binding positions include 178–180 (LAV), 186–191 (RKKMAS), 217–219 (DAA), and Tyr224. Tyr224 acts as the Proton donor in catalysis.

It belongs to the acetyltransferase family. GNAT subfamily. As to quaternary structure, oligomer. Post-translationally, autoacetylated. As to expression, expressed in green tissues.

It localises to the plastid. The protein resides in the chloroplast. It catalyses the reaction an N-terminal L-alpha-aminoacyl-[protein] + acetyl-CoA = N-terminal N(alpha)-acetyl-L-alpha-aminoacyl-[protein] + CoA + H(+). The catalysed reaction is L-lysyl-[protein] + acetyl-CoA = N(6)-acetyl-L-lysyl-[protein] + CoA + H(+). It carries out the reaction N-terminal L-methionyl-[protein] + acetyl-CoA = N-terminal N(alpha)-acetyl-L-methionyl-[protein] + CoA + H(+). The enzyme catalyses N-terminal L-seryl-[protein] + acetyl-CoA = N-terminal N(alpha)-acetyl-L-seryl-[protein] + CoA + H(+). It catalyses the reaction N-terminal L-valyl-[protein] + acetyl-CoA = N-terminal N(alpha)-acetyl-L-valyl-[protein] + CoA + H(+). The catalysed reaction is N-terminal L-threonyl-[protein] + acetyl-CoA = N-terminal N(alpha)-acetyl-L-threonyl-[protein] + CoA + H(+). It carries out the reaction N-terminal L-alanyl-[protein] + acetyl-CoA = N-terminal N(alpha)-acetyl-L-alanyl-[protein] + CoA + H(+). The enzyme catalyses N-terminal glycyl-[protein] + acetyl-CoA = N-terminal N(alpha)-acetylglycyl-[protein] + CoA + H(+). In terms of biological role, protein acetyltransferase with dual specificity triggering both N-alpha-acetylation (NTA), with a preference for leucine, methionine, serine, valine and to a lower extent threonine and alanine as substrates (can also use glycine), and epsilon-lysine acetylation (KA) of several plastid proteins. The sequence is that of GCN5-related N-acetyltransferase 10, chloroplastic from Arabidopsis thaliana (Mouse-ear cress).